Reading from the N-terminus, the 392-residue chain is MSHRKYEAPRHGSLAFLPRKRAARHRGKVKSFPKDDPKKPVHLTASMGYKAGMTTVVRDLDRPGAKMHKKEIVEAVTIIETPPLVAVGVVGYIETPRGLRSLTTVWAEHLSDEVKRRFYKNWYKSKKKAFTKYAKKHAEENGASITRELERIKKYCTVVRVLAHTQIRKTPLKQKKAHLMEIQVNGGSVADKVDFARNLFEKPIEIDSIFEKDEMIDVIAVTKGHGFQGVTSRWGTKKLPRKTHKGLRKVACIGAWHPSHVQWTVARAGQMGYHHRTSCNHKVFRIGKGSDEGNASTDFDISKKQITPMGGFVRYGEVKNDYIMVKGSVPGVKKRVMTLRKTLYPQTSRRATEKVELKWIDTSSKFGHGAFQTPEEKRAFMGTLKKDLVTSA.

Belongs to the universal ribosomal protein uL3 family.

It localises to the cytoplasm. Functionally, the L3 protein is a component of the large subunit of cytoplasmic ribosomes. This is Large ribosomal subunit protein uL3 (rpl3) from Aspergillus fumigatus (strain ATCC MYA-4609 / CBS 101355 / FGSC A1100 / Af293) (Neosartorya fumigata).